An 81-amino-acid chain; its full sequence is Defensin-like protein 313 (81 aa).

Positions 1 to 32 (MESKRSSSSPLLILITTIMIIFIISGPKSVDA) are cleaved as a signal peptide. Disulfide bonds link C34–C63, C45–C74, and C49–C76.

Belongs to the DEFL family.

Its subcellular location is the secreted. This Arabidopsis thaliana (Mouse-ear cress) protein is Defensin-like protein 313.